A 206-amino-acid chain; its full sequence is Small ribosomal subunit protein uS4 (206 aa).

An S4 RNA-binding domain is found at 96-156 (QRLDNVVYRM…EKSKTQARII (61 aa)).

The protein belongs to the universal ribosomal protein uS4 family. As to quaternary structure, part of the 30S ribosomal subunit. Contacts protein S5. The interaction surface between S4 and S5 is involved in control of translational fidelity.

Its function is as follows. One of the primary rRNA binding proteins, it binds directly to 16S rRNA where it nucleates assembly of the body of the 30S subunit. In terms of biological role, with S5 and S12 plays an important role in translational accuracy. The chain is Small ribosomal subunit protein uS4 from Pseudoalteromonas translucida (strain TAC 125).